Reading from the N-terminus, the 78-residue chain is Putative Fe(2+) transport protein A (78 aa).

It belongs to the FeoA family.

Might be involved in Fe(2+) ion uptake. The protein is Putative Fe(2+) transport protein A of Helicobacter pylori (strain J99 / ATCC 700824) (Campylobacter pylori J99).